Here is a 415-residue protein sequence, read N- to C-terminus: MGSLGAILKHPDDFYPLLKLKIAARHAEKQIPSEPHWAFCYSMLHKVSRSFGLVIQQLGPQLRDAVCIFYLVLRALDTVEDDTSISTEVKVPIVMAFHCHIYDNDWHFSCGTKEYKVLMDEFHHVSNAFLDLGSSYKEAIEDITMRMGAGMAKFICKEVETIDDYDEYCHYVAGLVGLGLSKLFHASGAEDLATDSLSNSMGLFLQKTNIIRDYLEDINEIPKSRMFWPRQIWSKYVDKLEDLKYEENSAKAVQCLNDMVTDALVHAEDCLKYMSDLRGPAIFRFCAIPQIMAIGTLALCFNNTQVFRGVVKMRRGLTAKVIDQTKTMSDVYGAFFDFSCLLKSKVDNNDPNATKTLSRLEAIQKTCKESGTLSKRKSYIIESESGHNSALIAIIFIILAILYAYLSSNLLPNKQ.

2 consecutive transmembrane segments (helical) span residues 281-301 (AIFRFCAIPQIMAIGTLALCF) and 391-411 (LIAIIFIILAILYAYLSSNLL).

It belongs to the phytoene/squalene synthase family. The cofactor is Mg(2+). Mn(2+) is required as a cofactor.

The protein localises to the endoplasmic reticulum membrane. The enzyme catalyses 2 (2E,6E)-farnesyl diphosphate + NADH + H(+) = squalene + 2 diphosphate + NAD(+). The catalysed reaction is 2 (2E,6E)-farnesyl diphosphate + NADPH + H(+) = squalene + 2 diphosphate + NADP(+). Its pathway is terpene metabolism; lanosterol biosynthesis; lanosterol from farnesyl diphosphate: step 1/3. Component of the triterpene saponins (e.g. ginsenosides or panaxosides) and phytosterols biosynthetic pathways. Catalyzes the biosynthesis of squalene. This chain is Squalene synthase 12, found in Panax ginseng (Korean ginseng).